Reading from the N-terminus, the 223-residue chain is Ribose-5-phosphate isomerase A (223 aa).

Residues 32-35, 85-88, and 98-101 contribute to the substrate site; these read TGST, DGAD, and KGGG. The active-site Proton acceptor is the E107. Position 125 (K125) interacts with substrate.

It belongs to the ribose 5-phosphate isomerase family. As to quaternary structure, homodimer.

The enzyme catalyses aldehydo-D-ribose 5-phosphate = D-ribulose 5-phosphate. The protein operates within carbohydrate degradation; pentose phosphate pathway; D-ribose 5-phosphate from D-ribulose 5-phosphate (non-oxidative stage): step 1/1. In terms of biological role, catalyzes the reversible conversion of ribose-5-phosphate to ribulose 5-phosphate. The chain is Ribose-5-phosphate isomerase A from Pseudomonas syringae pv. tomato (strain ATCC BAA-871 / DC3000).